The primary structure comprises 367 residues: Undecaprenyl-phosphate alpha-N-acetylglucosaminyl 1-phosphate transferase (367 aa).

The next 10 membrane-spanning stretches (helical) occupy residues 3–23 (LLTV…FLFF), 46–66 (LIPL…FGIV), 69–89 (YIPH…IGAL), 132–152 (VLGP…INAF), 158–178 (IDGL…MILW), 187–207 (IWCF…LGIL), 213–233 (VFMG…ILLE), 242–262 (ISPV…VAIM), 294–314 (AFVL…LAEY), and 318–338 (VPEW…GYCI).

This sequence belongs to the glycosyltransferase 4 family. WecA subfamily. The cofactor is Mg(2+). It depends on Mn(2+) as a cofactor.

The protein localises to the cell inner membrane. The catalysed reaction is di-trans,octa-cis-undecaprenyl phosphate + UDP-N-acetyl-alpha-D-glucosamine = N-acetyl-alpha-D-glucosaminyl-di-trans,octa-cis-undecaprenyl diphosphate + UMP. It functions in the pathway bacterial outer membrane biogenesis; LPS O-antigen biosynthesis. The protein operates within bacterial outer membrane biogenesis; enterobacterial common antigen biosynthesis. In terms of biological role, catalyzes the transfer of the GlcNAc-1-phosphate moiety from UDP-GlcNAc onto the carrier lipid undecaprenyl phosphate (C55-P), yielding GlcNAc-pyrophosphoryl-undecaprenyl (GlcNAc-PP-C55). The sequence is that of Undecaprenyl-phosphate alpha-N-acetylglucosaminyl 1-phosphate transferase from Escherichia coli O6:H1 (strain CFT073 / ATCC 700928 / UPEC).